The chain runs to 228 residues: Ribonuclease 3 (228 aa).

The RNase III domain occupies 8–130; the sequence is LKRLERRVDY…IIGAAFLDSD (123 aa). Glu43 is a Mg(2+) binding site. Residue Asp47 is part of the active site. Mg(2+) contacts are provided by Asp116 and Glu119. The active site involves Glu119. Residues 157–226 form the DRBM domain; it reads DPKTRLQEHL…ANKMLDSLSG (70 aa).

The protein belongs to the ribonuclease III family. As to quaternary structure, homodimer. Mg(2+) serves as cofactor.

It is found in the cytoplasm. The enzyme catalyses Endonucleolytic cleavage to 5'-phosphomonoester.. Functionally, digests double-stranded RNA. Involved in the processing of primary rRNA transcript to yield the immediate precursors to the large and small rRNAs (23S and 16S). Processes some mRNAs, and tRNAs when they are encoded in the rRNA operon. Processes pre-crRNA and tracrRNA of type II CRISPR loci if present in the organism. The protein is Ribonuclease 3 of Psychromonas ingrahamii (strain DSM 17664 / CCUG 51855 / 37).